The chain runs to 219 residues: 2-C-methyl-D-erythritol 4-phosphate cytidylyltransferase (219 aa).

This sequence belongs to the IspD/TarI cytidylyltransferase family. IspD subfamily.

The enzyme catalyses 2-C-methyl-D-erythritol 4-phosphate + CTP + H(+) = 4-CDP-2-C-methyl-D-erythritol + diphosphate. The protein operates within isoprenoid biosynthesis; isopentenyl diphosphate biosynthesis via DXP pathway; isopentenyl diphosphate from 1-deoxy-D-xylulose 5-phosphate: step 2/6. Functionally, catalyzes the formation of 4-diphosphocytidyl-2-C-methyl-D-erythritol from CTP and 2-C-methyl-D-erythritol 4-phosphate (MEP). In Bacteroides thetaiotaomicron (strain ATCC 29148 / DSM 2079 / JCM 5827 / CCUG 10774 / NCTC 10582 / VPI-5482 / E50), this protein is 2-C-methyl-D-erythritol 4-phosphate cytidylyltransferase.